The following is a 244-amino-acid chain: Ribosomal RNA large subunit methyltransferase E (244 aa).

Residues 1 to 23 (MATGGKKSAGRTTGSGPAGGSRN) are disordered. The S-adenosyl-L-methionine site is built by G91, W93, D116, D132, and D156. K196 (proton acceptor) is an active-site residue.

This sequence belongs to the class I-like SAM-binding methyltransferase superfamily. RNA methyltransferase RlmE family.

It is found in the cytoplasm. It carries out the reaction uridine(2552) in 23S rRNA + S-adenosyl-L-methionine = 2'-O-methyluridine(2552) in 23S rRNA + S-adenosyl-L-homocysteine + H(+). Its function is as follows. Specifically methylates the uridine in position 2552 of 23S rRNA at the 2'-O position of the ribose in the fully assembled 50S ribosomal subunit. The polypeptide is Ribosomal RNA large subunit methyltransferase E (Paramagnetospirillum magneticum (strain ATCC 700264 / AMB-1) (Magnetospirillum magneticum)).